The primary structure comprises 367 residues: Testis-specific serine/threonine-protein kinase 1 (367 aa).

One can recognise a Protein kinase domain in the interval 12–272 (YLLGINLGEG…IDEILSHCWM (261 aa)). ATP-binding positions include 18-26 (LGEGSYAKV) and lysine 41. Aspartate 136 functions as the Proton acceptor in the catalytic mechanism. Phosphothreonine is present on threonine 174. Positions 276-367 (ARGSPSVAIN…PQQPPETRAQ (92 aa)) are disordered. Residues 303–314 (GSDKKSATKLEP) are compositionally biased toward basic and acidic residues.

The protein belongs to the protein kinase superfamily. CAMK Ser/Thr protein kinase family. Interacts with TSSK2. Interacts with HSP90; this interaction stabilizes TSSK1. The cofactor is Mg(2+). Autophosphorylated. In terms of processing, ubiquitinated; HSP90 activity negatively regulates ubiquitination and degradation. Testis-specific. Present in sperm (at protein level).

It is found in the cytoplasm. The protein resides in the cytoplasmic vesicle. The protein localises to the secretory vesicle. It localises to the acrosome. Its subcellular location is the cell projection. It is found in the cilium. The protein resides in the flagellum. It carries out the reaction L-seryl-[protein] + ATP = O-phospho-L-seryl-[protein] + ADP + H(+). It catalyses the reaction L-threonyl-[protein] + ATP = O-phospho-L-threonyl-[protein] + ADP + H(+). Kinase activity is specifically inhibited by 2 classes of compounds: biphenyl compounds (1,1'-(biphenyl-4,4'-diyl)bis(2,2-dihydroxyethanone)) and 1,2,7-trialky-1H-imidazo[4,5-g]quinoxalin-6-one. Activated by phosphorylation on Thr-174 and potentially by autophosphorylation. Testis-specific serine/threonine-protein kinase required during spermatid development. Phosphorylates 'Ser-288' of TSKS. Involved in the late stages of spermatogenesis, during the reconstruction of the cytoplasm. During spermatogenesis, required for the transformation of a ring-shaped structure around the base of the flagellum originating from the chromatoid body. The chain is Testis-specific serine/threonine-protein kinase 1 (TSSK1B) from Homo sapiens (Human).